Reading from the N-terminus, the 138-residue chain is Small ribosomal subunit protein uS11c (138 aa).

The disordered stretch occupies residues 1–22 (MAKSIPKTGSRKNVRIGSRNQT).

This sequence belongs to the universal ribosomal protein uS11 family. Part of the 30S ribosomal subunit.

The protein localises to the plastid. The protein resides in the chloroplast. This Phaseolus angularis (Azuki bean) protein is Small ribosomal subunit protein uS11c.